The sequence spans 295 residues: 4-hydroxy-tetrahydrodipicolinate synthase (295 aa).

A pyruvate-binding site is contributed by T47. Residue Y135 is the Proton donor/acceptor of the active site. K163 serves as the catalytic Schiff-base intermediate with substrate. Position 204 (I204) interacts with pyruvate.

The protein belongs to the DapA family. In terms of assembly, homotetramer; dimer of dimers.

It localises to the cytoplasm. It carries out the reaction L-aspartate 4-semialdehyde + pyruvate = (2S,4S)-4-hydroxy-2,3,4,5-tetrahydrodipicolinate + H2O + H(+). It participates in amino-acid biosynthesis; L-lysine biosynthesis via DAP pathway; (S)-tetrahydrodipicolinate from L-aspartate: step 3/4. Catalyzes the condensation of (S)-aspartate-beta-semialdehyde [(S)-ASA] and pyruvate to 4-hydroxy-tetrahydrodipicolinate (HTPA). This Caldicellulosiruptor bescii (strain ATCC BAA-1888 / DSM 6725 / KCTC 15123 / Z-1320) (Anaerocellum thermophilum) protein is 4-hydroxy-tetrahydrodipicolinate synthase.